We begin with the raw amino-acid sequence, 715 residues long: Formate dehydrogenase H (715 aa).

Residues 1-56 (MKKVVTVCPYCASGCKINLVVDNGKIVRAEAAQGKTNQGTLCLKGYYGWDFINDTQ) form the 4Fe-4S Mo/W bis-MGD-type domain. [4Fe-4S] cluster-binding residues include C8, C11, C15, and C42. K44 (electron donor/acceptor) is an active-site residue. Residues R110, U140, N176, D179, S180, C201, D202, R204, G221, N223, M297, Q335, D404, T408, Q428, D429, S445, D478, R581, E582, H585, S587, Y678, and K679 each coordinate Mo-bis(molybdopterin guanine dinucleotide). U140 (proton donor/acceptor) is an active-site residue. Residue U140 is a non-standard amino acid, selenocysteine.

This sequence belongs to the prokaryotic molybdopterin-containing oxidoreductase family. Consists of two separable enzymatic activities: a formate dehydrogenase component (FDH-H) and hydrogenase-3. [4Fe-4S] cluster is required as a cofactor. It depends on Mo-bis(molybdopterin guanine dinucleotide) as a cofactor.

The enzyme catalyses formate + A + H(+) = AH2 + CO2. With respect to regulation, inhibited by aerobic conditions. Functionally, decomposes formic acid to hydrogen and carbon dioxide under anaerobic conditions in the absence of exogenous electron acceptors. The chain is Formate dehydrogenase H (fdhF) from Escherichia coli (strain K12).